Reading from the N-terminus, the 332-residue chain is 2,3-diketo-L-gulonate reductase (332 aa).

Residue H44 is the Proton donor of the active site. Residues 168 to 174 (ITMVDMS), 224 to 225 (WK), and 304 to 306 (GHE) contribute to the NAD(+) site.

It belongs to the LDH2/MDH2 oxidoreductase family. DlgD subfamily. In terms of assembly, homodimer.

It localises to the cytoplasm. It carries out the reaction 3-dehydro-L-gulonate + NAD(+) = 2,3-dioxo-L-gulonate + NADH + H(+). It catalyses the reaction 3-dehydro-L-gulonate + NADP(+) = 2,3-dioxo-L-gulonate + NADPH + H(+). Functionally, catalyzes the reduction of 2,3-diketo-L-gulonate in the presence of NADH, to form 3-keto-L-gulonate. In Shigella boydii serotype 4 (strain Sb227), this protein is 2,3-diketo-L-gulonate reductase.